A 212-amino-acid polypeptide reads, in one-letter code: Adenylate kinase (212 aa).

Residue 10-15 coordinates ATP; sequence GAGKGT. Positions 30-59 are NMP; sequence STGDMFRAAMANQTEMGRLAKSYIDKGELV. Residues threonine 31, arginine 36, 57–59, 86–89, and glutamine 93 each bind AMP; these read ELV and GYPR. Positions 127–159 are LID; the sequence is GRIINRKTGETFHKVFNPPVDYKEEDYYQREDD. ATP is bound by residues arginine 128 and 137 to 138; that span reads TF. 2 residues coordinate AMP: arginine 156 and arginine 167. Glutamine 195 serves as a coordination point for ATP.

This sequence belongs to the adenylate kinase family. In terms of assembly, monomer.

Its subcellular location is the cytoplasm. It carries out the reaction AMP + ATP = 2 ADP. It functions in the pathway purine metabolism; AMP biosynthesis via salvage pathway; AMP from ADP: step 1/1. Functionally, catalyzes the reversible transfer of the terminal phosphate group between ATP and AMP. Plays an important role in cellular energy homeostasis and in adenine nucleotide metabolism. In Streptococcus pyogenes serotype M3 (strain ATCC BAA-595 / MGAS315), this protein is Adenylate kinase.